The following is a 311-amino-acid chain: Exosome complex component Rrp4 (311 aa).

The S1 motif domain occupies 63–131 (GDVVIGEITD…EVKKVKLGLK (69 aa)). A KH domain is found at 139 to 197 (RDGILVYITPTKVPRLIGKRGSMINMVKEKTHCDIVVGQNGVVWIKGEPDMERIAEKVV). Residues 222–311 (GVEPEIQVEE…EVKDENNSER (90 aa)) are disordered. Over residues 241 to 300 (PESEDFEEASDYSEDVEVSPESEDIEEVSDESEDLEVESEDVEEGTDTPAAEEDDGEAGD) the composition is skewed to acidic residues. A compositionally biased stretch (basic and acidic residues) spans 301 to 311 (AEVKDENNSER).

This sequence belongs to the RRP4 family. Component of the archaeal exosome complex. Forms a trimer of Rrp4 and/or Csl4 subunits. The trimer associates with a hexameric ring-like arrangement composed of 3 Rrp41-Rrp42 heterodimers.

The protein localises to the cytoplasm. Functionally, non-catalytic component of the exosome, which is a complex involved in RNA degradation. Increases the RNA binding and the efficiency of RNA degradation. Confers strong poly(A) specificity to the exosome. The protein is Exosome complex component Rrp4 of Methanothermobacter thermautotrophicus (strain ATCC 29096 / DSM 1053 / JCM 10044 / NBRC 100330 / Delta H) (Methanobacterium thermoautotrophicum).